Reading from the N-terminus, the 220-residue chain is Deoxyribose-phosphate aldolase 1 (220 aa).

D89 serves as the catalytic Proton donor/acceptor. K151 functions as the Schiff-base intermediate with acetaldehyde in the catalytic mechanism. Catalysis depends on K180, which acts as the Proton donor/acceptor.

This sequence belongs to the DeoC/FbaB aldolase family. DeoC type 1 subfamily.

It is found in the cytoplasm. It catalyses the reaction 2-deoxy-D-ribose 5-phosphate = D-glyceraldehyde 3-phosphate + acetaldehyde. Its pathway is carbohydrate degradation; 2-deoxy-D-ribose 1-phosphate degradation; D-glyceraldehyde 3-phosphate and acetaldehyde from 2-deoxy-alpha-D-ribose 1-phosphate: step 2/2. In terms of biological role, catalyzes a reversible aldol reaction between acetaldehyde and D-glyceraldehyde 3-phosphate to generate 2-deoxy-D-ribose 5-phosphate. This Staphylococcus aureus (strain COL) protein is Deoxyribose-phosphate aldolase 1.